Reading from the N-terminus, the 256-residue chain is MAADGIDERSPLISPSSGNVTPTAPPYIQENNLQAELPPPYTAIASPDAGGVPVINCRVCQSLINLDGKLHQHVVKCTVCNEATPIKTPPLGKKYVRCPCNCLLICKDISRRIGCPRPNCRRIINLGPVMLIPEEQPAQPALPVQPDGTRVVCGHCGNTFLWMELRFNTLAKCPHCKKISSVGSALPRRRCCTYITMGMICIFIGVGLTVGTQDFARRFHATYVSWAVAYLVGLVCLVRACYWGAIKFSYPEHSFA.

Over residues 1–10 (MAADGIDERS) the composition is skewed to basic and acidic residues. The disordered stretch occupies residues 1–25 (MAADGIDERSPLISPSSGNVTPTAP). Residues 13–22 (ISPSSGNVTP) are compositionally biased toward polar residues. Cys-106 is an active-site residue. Positions 106–112 (CKDISRR) match the CX5R motif motif. 2 helical membrane-spanning segments follow: residues 191–211 (CCTY…LTVG) and 226–246 (WAVA…WGAI).

It is found in the late endosome membrane. It localises to the lysosome membrane. It carries out the reaction a 1,2-diacyl-sn-glycero-3-phospho-(1D-myo-inositol-4,5-bisphosphate) + H2O = a 1,2-diacyl-sn-glycero-3-phospho-(1D-myo-inositol-5-phosphate) + phosphate. In terms of biological role, catalyzes the hydrolysis of phosphatidylinositol-4,5-bisphosphate (PtdIns-4,5-P2) to phosphatidylinositol-4-phosphate (PtdIns-4-P). This chain is Type II phosphatidylinositol 4,5-bisphosphate 4-phosphatase, found in Xenopus laevis (African clawed frog).